The chain runs to 70 residues: DNA-directed RNA polymerase subunit omega (70 aa).

This sequence belongs to the RNA polymerase subunit omega family. As to quaternary structure, the RNAP catalytic core consists of 2 alpha, 1 beta, 1 beta' and 1 omega subunit. When a sigma factor is associated with the core the holoenzyme is formed, which can initiate transcription.

The catalysed reaction is RNA(n) + a ribonucleoside 5'-triphosphate = RNA(n+1) + diphosphate. Functionally, promotes RNA polymerase assembly. Latches the N- and C-terminal regions of the beta' subunit thereby facilitating its interaction with the beta and alpha subunits. This is DNA-directed RNA polymerase subunit omega from Pelobacter propionicus (strain DSM 2379 / NBRC 103807 / OttBd1).